The following is a 471-amino-acid chain: Regulator of microtubule dynamics protein 3 (471 aa).

Over 1–12 (MSRLGALGGSRA) the chain is Mitochondrial intermembrane. A helical transmembrane segment spans residues 13-35 (GLGLLLGTAAGLGFLCVLYSQRW). The Cytoplasmic portion of the chain corresponds to 36–471 (KRTQRHGRSQ…LEELEVILGK (436 aa)). Residues serine 44, serine 46, serine 50, and serine 57 each carry the phosphoserine modification. Positions 91–125 (LDRLDFVLTSLMALRREVEELQRSLQGLAGEIVGE) form a coiled coil. The short motif at 157 to 163 (VYFTASS) is the FFAT element. A Phosphothreonine modification is found at threonine 160. A disordered region spans residues 168–203 (TDAESEGGYTTANAESDYERDSDKESEDAEDEVSCE). 4 positions are modified to phosphoserine: serine 183, serine 193, serine 212, and serine 233. Over residues 191 to 201 (KESEDAEDEVS) the composition is skewed to acidic residues.

This sequence belongs to the RMDN family. In terms of assembly, interacts with PTPN2. Interacts with microtubules. Interacts with VAPB. Interacts (via FFAT motif) with MOSPD2 (via MSP domain). Interacts (via phosphorylated FFAT motif) with MOSPD2, VAPA and VAPB. Phosphorylation at Thr-160 of the FFAT motif activates interaction with MOSPD2, VAPA and VAPB.

It is found in the mitochondrion outer membrane. The protein localises to the cytoplasm. It localises to the nucleus. Its subcellular location is the cytoskeleton. The protein resides in the spindle. It is found in the spindle pole. Its function is as follows. Involved in cellular calcium homeostasis regulation. May participate in differentiation and apoptosis of keratinocytes. Overexpression induces apoptosis. The sequence is that of Regulator of microtubule dynamics protein 3 from Rattus norvegicus (Rat).